A 97-amino-acid chain; its full sequence is UPF0223 protein lp_2149 (97 aa).

The protein belongs to the UPF0223 family.

The sequence is that of UPF0223 protein lp_2149 from Lactiplantibacillus plantarum (strain ATCC BAA-793 / NCIMB 8826 / WCFS1) (Lactobacillus plantarum).